The chain runs to 125 residues: Large ribosomal subunit protein bL12 (125 aa).

Belongs to the bacterial ribosomal protein bL12 family. In terms of assembly, homodimer. Part of the ribosomal stalk of the 50S ribosomal subunit. Forms a multimeric L10(L12)X complex, where L10 forms an elongated spine to which 2 to 4 L12 dimers bind in a sequential fashion. Binds GTP-bound translation factors.

Its function is as follows. Forms part of the ribosomal stalk which helps the ribosome interact with GTP-bound translation factors. Is thus essential for accurate translation. This Mesorhizobium japonicum (strain LMG 29417 / CECT 9101 / MAFF 303099) (Mesorhizobium loti (strain MAFF 303099)) protein is Large ribosomal subunit protein bL12.